Here is a 516-residue protein sequence, read N- to C-terminus: Anthranilate synthase component 1 (516 aa).

L-tryptophan-binding positions include Ser56 and 283–285 (PYM). 324-325 (GT) provides a ligand contact to chorismate. Residue Glu351 participates in Mg(2+) binding. Residues Tyr439, Arg459, 473–475 (GGG), and Gly475 each bind chorismate. Mg(2+) is bound at residue Glu488.

Belongs to the anthranilate synthase component I family. As to quaternary structure, heterotetramer consisting of two non-identical subunits: a beta subunit (TrpG) and a large alpha subunit (TrpE). It depends on Mg(2+) as a cofactor.

It catalyses the reaction chorismate + L-glutamine = anthranilate + pyruvate + L-glutamate + H(+). It participates in amino-acid biosynthesis; L-tryptophan biosynthesis; L-tryptophan from chorismate: step 1/5. Feedback inhibited by tryptophan. Part of a heterotetrameric complex that catalyzes the two-step biosynthesis of anthranilate, an intermediate in the biosynthesis of L-tryptophan. In the first step, the glutamine-binding beta subunit (TrpG) of anthranilate synthase (AS) provides the glutamine amidotransferase activity which generates ammonia as a substrate that, along with chorismate, is used in the second step, catalyzed by the large alpha subunit of AS (TrpE) to produce anthranilate. In the absence of TrpG, TrpE can synthesize anthranilate directly from chorismate and high concentrations of ammonia. The polypeptide is Anthranilate synthase component 1 (trpE) (Mycobacterium bovis (strain ATCC BAA-935 / AF2122/97)).